A 529-amino-acid polypeptide reads, in one-letter code: MGILDGESKKARVGMERQDERLRSLSEANDRLMAKNHALAKALTRATQELTKAKAQLNQLAGPPMTFATMIRVHAANTDEQGVQHASAEVISGTRRMIVPVAANVQASRLEAGRTVLLNENMVIVDQHDTDTLGSVRTVRQVLDDGRLLVADSGGNVTLVRRAGTLAKENVNTGDRVSVDSSVRFALTLIPVEDDADLVLEETPDVTFDDIGGLDEQIERIRDAVQMPFLHRELFERYDLKPPKGVLLYGPPGNGKTLIAKAVANALAEGSGAGSGVFLSVKGPELLNKFVGESERLIRMIFRRARERAADGRPVIVFIDEMDSLLRTRGSGVSSDVETTIVPQFLSELDGVESLDNVMVIGASNRIDMIDPAVLRPGRLDVKIRVERPKAKQAEQIIRHYLTDDLPLTPGIEAKALTSVLVADIYAVSEHRHLCDVCDEHGQWSPVYLADVVSGAVLKNVVDRAKTKAVKISIESAEPAAIGVNLLAKAVQEEFEETRDAVLDADPVQWSRINGFEAGHVTRIRPTAQ.

Residues 15–62 (MERQDERLRSLSEANDRLMAKNHALAKALTRATQELTKAKAQLNQLAG) are a coiled coil. 253–258 (GNGKTL) serves as a coordination point for ATP.

This sequence belongs to the AAA ATPase family. In terms of assembly, homohexamer. Assembles into a hexameric ring structure.

The chain is AAA ATPase forming ring-shaped complexes from Bifidobacterium dentium (strain ATCC 27534 / DSM 20436 / JCM 1195 / Bd1).